The sequence spans 811 residues: LPS-assembly protein LptD (811 aa).

Residues 1-17 form the signal peptide; that stretch reads MTEPNRARKTRQRTAFA. The disordered stretch occupies residues 1-22; it reads MTEPNRARKTRQRTAFAAPDQR.

It belongs to the LptD family. In terms of assembly, component of the lipopolysaccharide transport and assembly complex. Interacts with LptE and LptA.

It is found in the cell outer membrane. Functionally, together with LptE, is involved in the assembly of lipopolysaccharide (LPS) at the surface of the outer membrane. The protein is LPS-assembly protein LptD of Ralstonia nicotianae (strain ATCC BAA-1114 / GMI1000) (Ralstonia solanacearum).